Consider the following 354-residue polypeptide: 3-isopropylmalate dehydrogenase (354 aa).

NAD(+) is bound at residue 76 to 87; that stretch reads GPRWDGAKERPE. 4 residues coordinate substrate: Arg94, Arg104, Arg130, and Asp215. Mg(2+) is bound by residues Asp215, Asp239, and Asp243. 273 to 285 lines the NAD(+) pocket; that stretch reads GSAPDIAGKNKAN.

The protein belongs to the isocitrate and isopropylmalate dehydrogenases family. LeuB type 1 subfamily. Homodimer. It depends on Mg(2+) as a cofactor. Requires Mn(2+) as cofactor.

It localises to the cytoplasm. The enzyme catalyses (2R,3S)-3-isopropylmalate + NAD(+) = 4-methyl-2-oxopentanoate + CO2 + NADH. The protein operates within amino-acid biosynthesis; L-leucine biosynthesis; L-leucine from 3-methyl-2-oxobutanoate: step 3/4. Its function is as follows. Catalyzes the oxidation of 3-carboxy-2-hydroxy-4-methylpentanoate (3-isopropylmalate) to 3-carboxy-4-methyl-2-oxopentanoate. The product decarboxylates to 4-methyl-2 oxopentanoate. The sequence is that of 3-isopropylmalate dehydrogenase from Bacillus thuringiensis subsp. konkukian (strain 97-27).